We begin with the raw amino-acid sequence, 418 residues long: Cobalt-zinc-cadmium resistance protein CzcC (418 aa).

Residues 1 to 22 (MRRLFLPLGLAVAFLSPNFAVA) form the signal peptide.

Belongs to the outer membrane factor (OMF) (TC 1.B.17) family.

The protein resides in the cell outer membrane. Functionally, czcC protein appears to modify the specificity of the system, perhaps by acting on the CzcB protein. When the CzcC protein is added to CzcA and CzcB, the efflux system gains specificity for cadmium and cobalt. The sequence is that of Cobalt-zinc-cadmium resistance protein CzcC (czcC) from Cupriavidus metallidurans (strain ATCC 43123 / DSM 2839 / NBRC 102507 / CH34) (Ralstonia metallidurans).